The primary structure comprises 312 residues: Coiled-coil domain-containing protein 42 homolog (312 aa).

2 coiled-coil regions span residues R34–E121 and A172–Q233.

This sequence belongs to the CFAP73 family.

This chain is Coiled-coil domain-containing protein 42 homolog, found in Nematostella vectensis (Starlet sea anemone).